Consider the following 1044-residue polypeptide: Ras GTPase-activating protein 1 (1044 aa).

Residue Met1 is modified to N-acetylmethionine. Positions 1–160 are hydrophobic; sequence MMAAEAGGEE…DEGDSLDGPE (160 aa). An SH2 1 domain is found at 178 to 269; that stretch reads WYHGKLDRTI…LKGEKLLYPV (92 aa). An SH3 domain is found at 276–338; the sequence is EDRRRVRAIL…VEDLVEEVGR (63 aa). The SH2 2 domain occupies 348-438; sequence WFHGKISKQE…VEGYYLKEPV (91 aa). Residues 471-574 enclose the PH domain; it reads NIVKKGYLLK…WMKGLQAFCN (104 aa). The 114-residue stretch at 574–687 folds into the C2 domain; it reads NLRKSSPGTS…QKGHATDEWF (114 aa). Position 612 is a phosphotyrosine (Tyr612). 2 repeats span residues 646–664 and 665–683; these read PDIN…KSKD and PDIL…GHAT. A Ras-GAP domain is found at 761 to 971; that stretch reads KLESLLLCTL…HRMIMFLDEL (211 aa). At Ser828 the chain carries Phosphoserine.

As to quaternary structure, interacts with SQSTM1. Interacts with SPSB1; the interaction does not promote degradation. Interacts with CAV2 (tyrosine phosphorylated form). Directly interacts with NCK1. Interacts with PDGFRB (tyrosine phosphorylated). Interacts (via SH2 domain) with the 'Tyr-9' phosphorylated form of PDPK1. Interacts with tyrosine-phosphorylated EPHB4. Phosphorylated by SRC and LCK. The phosphorylation SRC inhibits its ability to stimulate the Ras-GTPase activity, whereas phosphorylation by LCK does not display any effect on stimulation activity.

Its subcellular location is the cytoplasm. Inhibitory regulator of the Ras-cyclic AMP pathway. Stimulates the GTPase of normal but not oncogenic Ras p21. In Bos taurus (Bovine), this protein is Ras GTPase-activating protein 1 (RASA1).